Consider the following 357-residue polypeptide: 3-isopropylmalate dehydrogenase, chloroplastic (357 aa).

The transit peptide at methionine 1–threonine 29 directs the protein to the chloroplast. Residues arginine 120, arginine 130, arginine 151, and aspartate 238 each contribute to the substrate site. Mg(2+)-binding residues include aspartate 238, aspartate 262, and aspartate 266. Residue glycine 296–asparagine 308 coordinates NAD(+).

This sequence belongs to the isocitrate and isopropylmalate dehydrogenases family. As to quaternary structure, homodimer. It depends on Mg(2+) as a cofactor. Mn(2+) serves as cofactor.

It is found in the plastid. It localises to the chloroplast. It catalyses the reaction (2R,3S)-3-isopropylmalate + NAD(+) = 4-methyl-2-oxopentanoate + CO2 + NADH. It participates in amino-acid biosynthesis; L-leucine biosynthesis; L-leucine from 3-methyl-2-oxobutanoate: step 3/4. Its function is as follows. Catalyzes the oxidation of 3-carboxy-2-hydroxy-4-methylpentanoate (3-isopropylmalate) to 3-carboxy-4-methyl-2-oxopentanoate. The product decarboxylates to 4-methyl-2 oxopentanoate. This chain is 3-isopropylmalate dehydrogenase, chloroplastic, found in Solanum tuberosum (Potato).